A 301-amino-acid polypeptide reads, in one-letter code: Nucleosome assembly protein 1;3 (301 aa).

The stretch at 15–69 forms a coiled coil; the sequence is VETLKNKLQALAEQHVDVLESLAPVVRKRVDVLIEIQSQHDELEAKFLEEKAALE. The Nuclear export signal signature appears at 36 to 51; the sequence is LAPVVRKRVDVLIEIQ. The tract at residues 278-301 is disordered; the sequence is DEDYGASWVDDEEDDDDEYSDEEA.

Belongs to the nucleosome assembly protein (NAP) family.

It localises to the nucleus. The protein localises to the cytoplasm. Its function is as follows. May modulate chromatin structure by regulation of nucleosome assembly/disassembly. The polypeptide is Nucleosome assembly protein 1;3 (NAP1;3) (Oryza sativa subsp. japonica (Rice)).